The sequence spans 67 residues: DNA-directed RNA polymerase subunit omega (67 aa).

It belongs to the RNA polymerase subunit omega family. As to quaternary structure, the RNAP catalytic core consists of 2 alpha, 1 beta, 1 beta' and 1 omega subunit. When a sigma factor is associated with the core the holoenzyme is formed, which can initiate transcription.

The catalysed reaction is RNA(n) + a ribonucleoside 5'-triphosphate = RNA(n+1) + diphosphate. Functionally, promotes RNA polymerase assembly. Latches the N- and C-terminal regions of the beta' subunit thereby facilitating its interaction with the beta and alpha subunits. The protein is DNA-directed RNA polymerase subunit omega of Legionella pneumophila (strain Paris).